A 452-amino-acid chain; its full sequence is Lipase member H (452 aa).

The N-terminal stretch at 1–16 (MLRFYLFISLLCLVRS) is a signal peptide. N-linked (GlcNAc...) asparagine glycans are attached at residues Asn50, Asn66, and Asn122. Ser154 (nucleophile) is an active-site residue. Asp178 serves as the catalytic Charge relay system. Cys233 and Cys247 are disulfide-bonded. His249 serves as the catalytic Charge relay system. Asn263 carries N-linked (GlcNAc...) asparagine glycosylation. Disulfide bonds link Cys271–Cys282, Cys285–Cys293, and Cys428–Cys447.

Belongs to the AB hydrolase superfamily. Lipase family. As to quaternary structure, interacts with TTMP/C3orf52. In terms of tissue distribution, expressed in liver and lacrimal gland.

It localises to the secreted. It is found in the cell membrane. It carries out the reaction 1-hexadecanoyl-2-(9Z-octadecenoyl)-sn-glycero-3-phosphate + H2O = 2-(9Z-octadecenoyl)-sn-glycero-3-phosphate + hexadecanoate + H(+). Functionally, hydrolyzes specifically phosphatidic acid (PA) to produce 2-acyl lysophosphatidic acid (LPA; a potent bioactive lipid mediator) and fatty acid. Does not hydrolyze other phospholipids, like phosphatidylserine (PS), phosphatidylcholine (PC) and phosphatidylethanolamine (PE) or triacylglycerol (TG). The protein is Lipase member H (LIPH) of Oryctolagus cuniculus (Rabbit).